Consider the following 261-residue polypeptide: Ribosomal RNA small subunit methyltransferase A (261 aa).

S-adenosyl-L-methionine contacts are provided by H13, L15, G40, E61, D85, and N105.

It belongs to the class I-like SAM-binding methyltransferase superfamily. rRNA adenine N(6)-methyltransferase family. RsmA subfamily.

It is found in the cytoplasm. It catalyses the reaction adenosine(1518)/adenosine(1519) in 16S rRNA + 4 S-adenosyl-L-methionine = N(6)-dimethyladenosine(1518)/N(6)-dimethyladenosine(1519) in 16S rRNA + 4 S-adenosyl-L-homocysteine + 4 H(+). Specifically dimethylates two adjacent adenosines (A1518 and A1519) in the loop of a conserved hairpin near the 3'-end of 16S rRNA in the 30S particle. May play a critical role in biogenesis of 30S subunits. This Flavobacterium johnsoniae (strain ATCC 17061 / DSM 2064 / JCM 8514 / BCRC 14874 / CCUG 350202 / NBRC 14942 / NCIMB 11054 / UW101) (Cytophaga johnsonae) protein is Ribosomal RNA small subunit methyltransferase A.